The sequence spans 773 residues: Carnitine O-palmitoyltransferase 1, liver isoform (773 aa).

Ala2 is subject to N-acetylalanine. Over 2–47 (AEAHQAVAFQFTVTPDGIDLRLSHEALRQIYLSGLHSWKKKFIRFK) the chain is Cytoplasmic. The chain crosses the membrane as a helical span at residues 48-73 (NGIITGVYPASPSSWLIVVVGVMTTM). The Mitochondrial intermembrane portion of the chain corresponds to 74–102 (YAKIDPSLGIIAKINRTLETANCMSSQTK). A helical transmembrane segment spans residues 103-122 (NVVSGVLFGTGLWVALIVTM). Residues 123–773 (RYSLKVLLSY…LFGLSSNSKK (651 aa)) are Cytoplasmic-facing. At Tyr282 the chain carries 3'-nitrotyrosine. His473 acts as the Proton acceptor in catalysis. 555–567 (GKGIIKKCRTSPD) serves as a coordination point for CoA. At Thr588 the chain carries Phosphothreonine. Tyr589 bears the 3'-nitrotyrosine mark. (R)-carnitine is bound by residues Tyr589 and Thr602. Residue Thr604 is modified to Phosphothreonine. 2 positions are modified to phosphoserine: Ser741 and Ser747.

Belongs to the carnitine/choline acetyltransferase family. Homohexamer and homotrimer. Identified in a complex that contains at least CPT1A, ACSL1 and VDAC1. Also identified in complexes with ACSL1 and VDAC2 and VDAC3. Interacts with ZDHHC4. As to expression, strong expression in kidney and heart, and lower in liver and skeletal muscle.

It localises to the mitochondrion outer membrane. The catalysed reaction is (R)-carnitine + hexadecanoyl-CoA = O-hexadecanoyl-(R)-carnitine + CoA. It catalyses the reaction succinyl-CoA + L-lysyl-[protein] = N(6)-succinyl-L-lysyl-[protein] + CoA + H(+). Its pathway is lipid metabolism; fatty acid beta-oxidation. With respect to regulation, inhibited by malonyl-CoA. In terms of biological role, catalyzes the transfer of the acyl group of long-chain fatty acid-CoA conjugates onto carnitine, an essential step for the mitochondrial uptake of long-chain fatty acids and their subsequent beta-oxidation in the mitochondrion. Also possesses a lysine succinyltransferase activity that can regulate enzymatic activity of substrate proteins such as ENO1 and metabolism independent of its classical carnitine O-palmitoyltransferase activity. Plays an important role in hepatic triglyceride metabolism. Also plays a role in inducible regulatory T-cell (iTreg) differentiation once activated by butyryl-CoA that antagonizes malonyl-CoA-mediated CPT1A repression. Sustains the IFN-I response by recruiting ZDHCC4 to palmitoylate MAVS at the mitochondria leading to MAVS stabilization and activation. Promotes ROS-induced oxidative stress in liver injury via modulation of NFE2L2 and NLRP3-mediated signaling pathways. The polypeptide is Carnitine O-palmitoyltransferase 1, liver isoform (Homo sapiens (Human)).